The primary structure comprises 85 residues: Small ribosomal subunit protein bS20 (85 aa).

This sequence belongs to the bacterial ribosomal protein bS20 family.

Its function is as follows. Binds directly to 16S ribosomal RNA. This Borrelia turicatae (strain 91E135) protein is Small ribosomal subunit protein bS20.